The primary structure comprises 642 residues: Ribosome biogenesis protein BOP1 homolog (642 aa).

The tract at residues 1–28 is disordered; that stretch reads MIHKRMNSTELERTSKKIDDYDSSDEED. Positions 10 to 20 are enriched in basic and acidic residues; sequence ELERTSKKIDD. 6 WD repeats span residues 311–351, 353–393, 472–510, 513–552, 556–595, and 612–642; these read GHSG…CLKT, SLDG…DRHR, RLKGLMTVLSFHPSEPFLFVGTQRYIRIYDLAKCQLKKK, TGSQWMSCMHVDFRGDNVFVGGHDRVFSWIDLQLSSKPWK, HHTAAIRGVTQHARCPLIATVSDDSTAIVYYARISSDSLK, and KNGLSILAAIFHPSQPWLITAHVDGSIALFT.

The protein belongs to the WD repeat BOP1/ERB1 family.

It is found in the nucleus. It localises to the nucleolus. The protein resides in the nucleoplasm. Its function is as follows. Required for maturation of ribosomal RNAs and formation of the large ribosomal subunit. The polypeptide is Ribosome biogenesis protein BOP1 homolog (Brugia malayi (Filarial nematode worm)).